A 695-amino-acid chain; its full sequence is Protein ACTIVITY OF BC1 COMPLEX KINASE 7, chloroplastic (695 aa).

Positions 259-589 (EFEEQPIAAA…VQEIRKQADD (331 aa)) constitute a Protein kinase domain. ATP is bound by residues 265 to 273 (IAAASLGQV) and lysine 287. Aspartate 421 (proton acceptor) is an active-site residue. Helical transmembrane passes span 633–653 (TILQ…NIGV) and 659–679 (GSQL…LLVL).

This sequence belongs to the protein kinase superfamily. ADCK protein kinase family. In terms of tissue distribution, mostly expressed in leaves and flowers, and, to a lower extent, in roots.

It localises to the plastid. The protein localises to the chloroplast thylakoid membrane. It is found in the chloroplast. The protein resides in the plastoglobule. It carries out the reaction L-seryl-[protein] + ATP = O-phospho-L-seryl-[protein] + ADP + H(+). It catalyses the reaction L-threonyl-[protein] + ATP = O-phospho-L-threonyl-[protein] + ADP + H(+). Functionally, involved in resistance to oxidative stress. Influences responses to reactive oxygen species (ROS) production. Regulates plastoglobules formation in thylakoids. Together with OSA1, regulates iron distribution within the chloroplast and mediates the oxidative stress response. Together with ABC1K8, influences chloroplast lipid synthesis/accumulation and modulates chloroplast membrane composition in response to stress. The protein is Protein ACTIVITY OF BC1 COMPLEX KINASE 7, chloroplastic of Arabidopsis thaliana (Mouse-ear cress).